A 97-amino-acid chain; its full sequence is Co-chaperonin GroES (97 aa).

This sequence belongs to the GroES chaperonin family. In terms of assembly, heptamer of 7 subunits arranged in a ring. Interacts with the chaperonin GroEL.

The protein localises to the cytoplasm. Together with the chaperonin GroEL, plays an essential role in assisting protein folding. The GroEL-GroES system forms a nano-cage that allows encapsulation of the non-native substrate proteins and provides a physical environment optimized to promote and accelerate protein folding. GroES binds to the apical surface of the GroEL ring, thereby capping the opening of the GroEL channel. The protein is Co-chaperonin GroES of Bifidobacterium longum (strain NCC 2705).